Reading from the N-terminus, the 352-residue chain is Putative [LysW]-L-2-aminoadipate/[LysW]-L-glutamate phosphate reductase (352 aa).

Residues 10 to 13 (SGFT) and 34 to 36 (SRK) each bind NADP(+). Cysteine 151 is a catalytic residue. Asparagine 319 contacts NADP(+).

Belongs to the NAGSA dehydrogenase family. Type 1 subfamily. LysY sub-subfamily.

The protein resides in the cytoplasm. It carries out the reaction [amino-group carrier protein]-C-terminal-N-(1-carboxy-5-oxopentan-1-yl)-L-glutamine + phosphate + NADP(+) = [amino-group carrier protein]-C-terminal-N-(1-carboxy-5-phosphooxy-5-oxopentan-1-yl)-L-glutamine + NADPH + H(+). It catalyses the reaction [amino-group carrier protein]-C-terminal-gamma-(L-glutamyl-5-semialdehyde)-L-glutamate + phosphate + NADP(+) = [amino-group carrier protein]-C-terminal-gamma-(5-phospho-L-glutamyl)-L-glutamate + NADPH + H(+). The protein operates within amino-acid biosynthesis; L-lysine biosynthesis via AAA pathway; L-lysine from L-alpha-aminoadipate (Thermus route): step 3/5. It participates in amino-acid biosynthesis; L-arginine biosynthesis. Involved in both the arginine and lysine biosynthetic pathways. This chain is Putative [LysW]-L-2-aminoadipate/[LysW]-L-glutamate phosphate reductase, found in Pyrobaculum neutrophilum (strain DSM 2338 / JCM 9278 / NBRC 100436 / V24Sta) (Thermoproteus neutrophilus).